We begin with the raw amino-acid sequence, 388 residues long: Ovalbumin-related protein Y (388 aa).

An intrachain disulfide couples cysteine 74 to cysteine 121. 4 N-linked (GlcNAc...) asparagine glycosylation sites follow: asparagine 95, asparagine 215, asparagine 293, and asparagine 312.

Belongs to the serpin family. Ov-serpin subfamily. Post-translationally, N-glycosylated on at least two Asn residues by ovomucoid type carbohydrate units. In terms of processing, the N-terminus is blocked. Major protein of egg white. Expressed in the magnum of the oviduct (at protein level).

The protein resides in the secreted. This is Ovalbumin-related protein Y (SERPINB14B) from Gallus gallus (Chicken).